A 360-amino-acid polypeptide reads, in one-letter code: Magnesium-protoporphyrin IX monomethyl ester [oxidative] cyclase (360 aa).

The interval 1-21 (MPPTAVTEATAVPGSNVTTKD) is disordered.

The protein belongs to the AcsF family. It depends on Fe cation as a cofactor.

It catalyses the reaction Mg-protoporphyrin IX 13-monomethyl ester + 3 NADPH + 3 O2 + 2 H(+) = 3,8-divinyl protochlorophyllide a + 3 NADP(+) + 5 H2O. The protein operates within porphyrin-containing compound metabolism; chlorophyll biosynthesis (light-independent). Catalyzes the formation of the isocyclic ring in chlorophyll biosynthesis. Mediates the cyclase reaction, which results in the formation of divinylprotochlorophyllide (Pchlide) characteristic of all chlorophylls from magnesium-protoporphyrin IX 13-monomethyl ester (MgPMME). The polypeptide is Magnesium-protoporphyrin IX monomethyl ester [oxidative] cyclase (Synechococcus sp. (strain CC9311)).